The chain runs to 115 residues: Large ribosomal subunit protein bL19 (115 aa).

The protein belongs to the bacterial ribosomal protein bL19 family.

Its function is as follows. This protein is located at the 30S-50S ribosomal subunit interface and may play a role in the structure and function of the aminoacyl-tRNA binding site. This is Large ribosomal subunit protein bL19 from Lachnospira eligens (strain ATCC 27750 / DSM 3376 / VPI C15-48 / C15-B4) (Eubacterium eligens).